Consider the following 214-residue polypeptide: Ribonuclease HII (214 aa).

Positions 27–214 (SVVAGIDEAG…SPIKQMCAIV (188 aa)) constitute an RNase H type-2 domain. Residues D33, E34, and D126 each coordinate a divalent metal cation.

This sequence belongs to the RNase HII family. Mn(2+) serves as cofactor. Requires Mg(2+) as cofactor.

The protein localises to the cytoplasm. It carries out the reaction Endonucleolytic cleavage to 5'-phosphomonoester.. Its function is as follows. Endonuclease that specifically degrades the RNA of RNA-DNA hybrids. The polypeptide is Ribonuclease HII (rnhB) (Chlamydia pneumoniae (Chlamydophila pneumoniae)).